The chain runs to 31 residues: Potassium channel toxin alpha-KTx 5.1 (31 aa).

3 disulfides stabilise this stretch: C3–C21, C8–C26, and C12–C28. Residues 6–9 (RMCQ) form a [R/K]XCQ motif region. H31 carries the post-translational modification Histidine amide.

Belongs to the short scorpion toxin superfamily. Potassium channel inhibitor family. Alpha-KTx 05 subfamily. In terms of processing, two disulfide bonds are the minimal requirement needed to produce a nativelike and bio-active conformation in this toxin. The third disulfide provides an additional contribution to structure stabilization and can modulate biological potency depending on its position and the structural regions involved in biological activity. In terms of tissue distribution, expressed by the venom gland.

Its subcellular location is the secreted. Blocker for the small conductance calcium-activated potassium channels. Shows the best affinity for KCa2.2/KCNN2 (Kd=0.2 nM), followed by KCa2.3/KCNN3 (Kd=1.1 nM) and KCa2.1/KCNN1 (Kd=325 nM). This is Potassium channel toxin alpha-KTx 5.1 from Leiurus hebraeus (Hebrew deathstalker scorpion).